Here is a 177-residue protein sequence, read N- to C-terminus: ATP synthase subunit delta (177 aa).

This sequence belongs to the ATPase delta chain family. In terms of assembly, F-type ATPases have 2 components, F(1) - the catalytic core - and F(0) - the membrane proton channel. F(1) has five subunits: alpha(3), beta(3), gamma(1), delta(1), epsilon(1). F(0) has three main subunits: a(1), b(2) and c(10-14). The alpha and beta chains form an alternating ring which encloses part of the gamma chain. F(1) is attached to F(0) by a central stalk formed by the gamma and epsilon chains, while a peripheral stalk is formed by the delta and b chains.

Its subcellular location is the cell inner membrane. F(1)F(0) ATP synthase produces ATP from ADP in the presence of a proton or sodium gradient. F-type ATPases consist of two structural domains, F(1) containing the extramembraneous catalytic core and F(0) containing the membrane proton channel, linked together by a central stalk and a peripheral stalk. During catalysis, ATP synthesis in the catalytic domain of F(1) is coupled via a rotary mechanism of the central stalk subunits to proton translocation. In terms of biological role, this protein is part of the stalk that links CF(0) to CF(1). It either transmits conformational changes from CF(0) to CF(1) or is implicated in proton conduction. This Yersinia enterocolitica serotype O:8 / biotype 1B (strain NCTC 13174 / 8081) protein is ATP synthase subunit delta.